Here is a 512-residue protein sequence, read N- to C-terminus: Solute carrier family 40 member 2 (512 aa).

Residues Met-1–Ser-28 form a disordered region. Acidic residues predominate over residues Gln-17–Pro-27. Helical transmembrane passes span Val-55 to Val-75, Leu-105 to Val-125, Phe-133 to Ser-153, Gly-187 to Val-207, Ile-214 to Val-234, Ile-310 to Leu-330, Tyr-343 to Tyr-363, Gly-376 to Val-396, Met-405 to Ile-425, Gly-442 to Val-462, and Phe-468 to Ile-488.

The protein belongs to the ferroportin (FP) (TC 2.A.100) family. SLC40A subfamily.

It is found in the vacuole membrane. In terms of biological role, vacuolar transporter that is involved in the transport of excess nickel into the vacuole under iron deficiency, increasing cellular tolerance to nickel under iron deficiency stress response. This Arabidopsis thaliana (Mouse-ear cress) protein is Solute carrier family 40 member 2 (IREG2).